We begin with the raw amino-acid sequence, 647 residues long: Exoribonuclease 2 (647 aa).

Residues 192–519 (RIDLTSLDFV…NHRLLKAIIQ (328 aa)) form the RNB domain. Positions 564–646 (EQRFTAEIID…ETRNIVARPT (83 aa)) constitute an S1 motif domain.

It belongs to the RNR ribonuclease family. RNase II subfamily.

It is found in the cytoplasm. The catalysed reaction is Exonucleolytic cleavage in the 3'- to 5'-direction to yield nucleoside 5'-phosphates.. Its function is as follows. Involved in mRNA degradation. Hydrolyzes single-stranded polyribonucleotides processively in the 3' to 5' direction. The polypeptide is Exoribonuclease 2 (Photorhabdus laumondii subsp. laumondii (strain DSM 15139 / CIP 105565 / TT01) (Photorhabdus luminescens subsp. laumondii)).